The chain runs to 370 residues: MAQNKPNAFMAFVADWRACNRFGRGLSTSEAVAKCGPIWEGMSDRERGQYKSKAKDSNVLERESKTERLNCPGVHSKMQVEKNEAIDAELQMKRNIKRIVLKATNSMKLEEREFLFVSFNYFTKALNGDVYQPAELSACRFSLKGGISSNYSTMINPGHIIFGQTSDAQDHSRTTHKLPLPPNAMGEKNLGNLYSDTLKWLSASNDEEDEQYDHPVIVYTTPELMPVVKSCFRYLACEGDTDKHAEKIMVYDICYLFLTLKKTVLDLVGVPSDHMNIHVTNSFFRRDFFEFSSGIACDYHEEVDRTKYCTKSMVLRWGYMISHYICGDLAIPLQPRKHVPIEVKHSYTVTPGDSSLALDGTWTDSGYSGY.

Residues 2-68 (AQNKPNAFMA…VLERESKTER (67 aa)) constitute a DNA-binding region (HMG box).

The protein belongs to the maelstrom family.

It is found in the cytoplasm. The protein resides in the nucleus. Involved both in the piRNA and miRNA metabolic processes. As a component of the meiotic nuage, plays a central role during oogenesis by repressing transposable elements and preventing their mobilization, which is essential for the germline integrity. Repression of transposable elements is mediated via the piRNA metabolic process, which mediates the repression of transposable elements during meiosis by forming complexes composed of piRNAs and Piwi proteins and governs the repression of transposons. As a nuclear component, it is required for proper differentiation in the germline stem cell (GSC) lineage by repressing microRNA-7 (miR-7), thereby acting as an indirect regulator of bag-of-marbles (Bam). Acts by binding to the promoter of miR-7 gene and repressing its expression; miR-7 repression alleviates the Bam repression by miR-7, thereby allowing differentiation in the germline stem cell (GSC) lineage. The polypeptide is Protein maelstrom 2 (mael2) (Drosophila pseudoobscura pseudoobscura (Fruit fly)).